The following is a 91-amino-acid chain: Parbolysin P6 (91 aa).

3 disulfides stabilise this stretch: Cys16–Cys37, Cys22–Cys33, and Cys47–Cys60.

Belongs to the worm cytolysin family. In terms of tissue distribution, localized within the skin and proboscis and are most readily isolated from body mucus secretions.

It localises to the secreted. Its function is as follows. Cytolysin that shows hemolytic activity (on bovine erythrocytes, HC(50)=5.75 mg/ml). This hemolytic activity is completely inhibited by small unilamelar vesicles composed of PC/PG, PC/PI and PC/PS in 1:1 molar ratios (with at least 100 mg/ml concentration). The chain is Parbolysin P6 from Parborlasia corrugatus (Antarctic nemertean worm).